The chain runs to 304 residues: MANYEFSQVSGDRPGCRLSRKAQIGLGVGLLVLIALVVGIVVILLRPRSLLVWTGEPTTKHFSDIFLGRCLIYTQILRPEMRDQNCQEILSTFKGAFVSKNPCNITREDYAPLVKLVTQTIPCNKTLFWSKSKHLAHQYTWIQGKMFTLEDTLLGYIADDLRWCGDPSTSDMNYVSCPHWSENCPNNPITVFWKVISQKFAEDACGVVQVMLNGSLREPFYKNSTFGSVEVFSLDPNKVHKLQAWVMHDIEGASSNACSSSSLNELKMIVQKRNMIFACVDNYRPARFLQCVKNPEHPSCRLNT.

The Cytoplasmic segment spans residues 1-21 (MANYEFSQVSGDRPGCRLSRK). The helical; Signal-anchor for type II membrane protein transmembrane segment at 22–44 (AQIGLGVGLLVLIALVVGIVVIL) threads the bilayer. Topologically, residues 45–304 (LRPRSLLVWT…PEHPSCRLNT (260 aa)) are extracellular. 3 cysteine pairs are disulfide-bonded: cysteine 70/cysteine 86, cysteine 103/cysteine 184, and cysteine 164/cysteine 177. N-linked (GlcNAc...) asparagine glycosylation occurs at asparagine 104. The active site involves cysteine 123. A glycan (N-linked (GlcNAc...) asparagine) is linked at asparagine 124. The active site involves cysteine 205. 2 N-linked (GlcNAc...) asparagine glycosylation sites follow: asparagine 213 and asparagine 223. 2 disulfides stabilise this stretch: cysteine 258–cysteine 279 and cysteine 291–cysteine 300.

The protein belongs to the ADP-ribosyl cyclase family. As to quaternary structure, homodimer.

It is found in the membrane. The catalysed reaction is NAD(+) = cyclic ADP-beta-D-ribose + nicotinamide + H(+). The enzyme catalyses nicotinate + NADP(+) = nicotinate-adenine dinucleotide phosphate + nicotinamide. It carries out the reaction NAD(+) + H2O = ADP-D-ribose + nicotinamide + H(+). Functionally, synthesizes the second messengers cyclic ADP-ribose (cADPR) and nicotinate-adenine dinucleotide phosphate (NAADP), the former a second messenger for glucose-induced insulin secretion, the latter a Ca(2+) mobilizer. Also has cADPR hydrolase activity. This chain is ADP-ribosyl cyclase/cyclic ADP-ribose hydrolase 1 (Cd38), found in Mus musculus (Mouse).